The chain runs to 110 residues: Co-chaperonin GroES (110 aa).

Belongs to the GroES chaperonin family. In terms of assembly, heptamer of 7 subunits arranged in a ring. Interacts with the chaperonin GroEL.

The protein localises to the cytoplasm. Together with the chaperonin GroEL, plays an essential role in assisting protein folding. The GroEL-GroES system forms a nano-cage that allows encapsulation of the non-native substrate proteins and provides a physical environment optimized to promote and accelerate protein folding. GroES binds to the apical surface of the GroEL ring, thereby capping the opening of the GroEL channel. The chain is Co-chaperonin GroES from Mycoplasma genitalium (strain ATCC 33530 / DSM 19775 / NCTC 10195 / G37) (Mycoplasmoides genitalium).